Here is a 361-residue protein sequence, read N- to C-terminus: UDP-3-O-acylglucosamine N-acyltransferase (361 aa).

His-253 acts as the Proton acceptor in catalysis.

Belongs to the transferase hexapeptide repeat family. LpxD subfamily. As to quaternary structure, homotrimer.

The enzyme catalyses a UDP-3-O-[(3R)-3-hydroxyacyl]-alpha-D-glucosamine + a (3R)-hydroxyacyl-[ACP] = a UDP-2-N,3-O-bis[(3R)-3-hydroxyacyl]-alpha-D-glucosamine + holo-[ACP] + H(+). Its pathway is bacterial outer membrane biogenesis; LPS lipid A biosynthesis. Catalyzes the N-acylation of UDP-3-O-acylglucosamine using 3-hydroxyacyl-ACP as the acyl donor. Is involved in the biosynthesis of lipid A, a phosphorylated glycolipid that anchors the lipopolysaccharide to the outer membrane of the cell. The protein is UDP-3-O-acylglucosamine N-acyltransferase of Burkholderia pseudomallei (strain 1710b).